We begin with the raw amino-acid sequence, 245 residues long: tRNA (guanine-N(7)-)-methyltransferase (245 aa).

The S-adenosyl-L-methionine site is built by Glu-69, Glu-94, Asp-121, and Asp-144. Residue Asp-144 is part of the active site. Substrate-binding positions include Lys-148, Asp-180, and 217-220 (TKFE). The segment at 200 to 225 (NLSSSGDYVPRPENRPKTKFERRGEG) is disordered. The span at 209-225 (PRPENRPKTKFERRGEG) shows a compositional bias: basic and acidic residues.

Belongs to the class I-like SAM-binding methyltransferase superfamily. TrmB family.

It catalyses the reaction guanosine(46) in tRNA + S-adenosyl-L-methionine = N(7)-methylguanosine(46) in tRNA + S-adenosyl-L-homocysteine. It participates in tRNA modification; N(7)-methylguanine-tRNA biosynthesis. Functionally, catalyzes the formation of N(7)-methylguanine at position 46 (m7G46) in tRNA. The polypeptide is tRNA (guanine-N(7)-)-methyltransferase (Idiomarina loihiensis (strain ATCC BAA-735 / DSM 15497 / L2-TR)).